A 382-amino-acid chain; its full sequence is Chaperone protein DnaJ 2 (382 aa).

In terms of domain architecture, J spans 4 to 68 (DYYGLLGVSK…DKRRIVDLGG (65 aa)). Residues 132 to 214 (GVTKQVTVDT…CMGDGRIRAR (83 aa)) form a CR-type zinc finger. 8 residues coordinate Zn(2+): cysteine 145, cysteine 148, cysteine 162, cysteine 165, cysteine 188, cysteine 191, cysteine 202, and cysteine 205. CXXCXGXG motif repeat units lie at residues 145–152 (CDRCQGKG), 162–169 (CDTCGGRG), 188–195 (CPTCRGVG), and 202–209 (CQQCMGDG).

This sequence belongs to the DnaJ family. Homodimer. Interacts with RNase J. Zn(2+) serves as cofactor.

It is found in the cytoplasm. Participates actively in the response to hyperosmotic and heat shock by preventing the aggregation of stress-denatured proteins and by disaggregating proteins, also in an autonomous, DnaK-independent fashion. Unfolded proteins bind initially to DnaJ; upon interaction with the DnaJ-bound protein, DnaK hydrolyzes its bound ATP, resulting in the formation of a stable complex. GrpE releases ADP from DnaK; ATP binding to DnaK triggers the release of the substrate protein, thus completing the reaction cycle. Several rounds of ATP-dependent interactions between DnaJ, DnaK and GrpE are required for fully efficient folding. Also involved, together with DnaK and GrpE, in the DNA replication of plasmids through activation of initiation proteins. Inhibits the beta-lactamase and RNase activity of RNase J. The polypeptide is Chaperone protein DnaJ 2 (Mycobacterium tuberculosis (strain ATCC 25618 / H37Rv)).